The sequence spans 329 residues: HTH-type transcriptional regulator ArgR (329 aa).

Positions 214-312 (TQAVLLMEAN…GVTPREDRNQ (99 aa)) constitute an HTH araC/xylS-type domain. 2 DNA-binding regions (H-T-H motif) span residues 231 to 252 (DEIA…KQYL) and 279 to 302 (IIQI…RNFF). The segment at 307–329 (REDRNQRRGGSAFETTFTPVERG) is disordered. The segment covering 319 to 329 (FETTFTPVERG) has biased composition (polar residues).

ArgR could be a transcriptional activator of the dauBAR operon in response to the presence of L-Arg. This chain is HTH-type transcriptional regulator ArgR (argR), found in Pseudomonas aeruginosa (strain ATCC 15692 / DSM 22644 / CIP 104116 / JCM 14847 / LMG 12228 / 1C / PRS 101 / PAO1).